The chain runs to 431 residues: Gamma conglutin 1 (431 aa).

The N-terminal stretch at methionine 1–alanine 24 is a signal peptide. A Peptidase A1 domain is found at histidine 51 to serine 407. Cystine bridges form between cysteine 79–cysteine 168, cysteine 93–cysteine 106, cysteine 98–cysteine 123, cysteine 109–cysteine 118, and cysteine 322–cysteine 369.

It belongs to the peptidase A1 family. Two-subunit monomeric unit made of alpha and beta subunits coupled by disulfide bonds (at pH 4.5 and under non-reducing conditions). Monomeric alpha and beta subunits in reducing conditions. Can also form oligomers including dimer, tetramer and cyclic hexamer (trimer of dimers) (at pH &gt; 5.5). Component of globulins complexes which accumulate in seeds. Interacts with flavonoids (e.g. apigenin glucosides) present in globulins complexes.

The protein localises to the secreted. Its subcellular location is the extracellular space. Its function is as follows. Sulfur-rich seed storage protein that remains undegraded at germination. This Prunus dulcis (Almond) protein is Gamma conglutin 1.